The chain runs to 435 residues: Serine--tRNA ligase (435 aa).

234 to 236 serves as a coordination point for L-serine; sequence TAE. Residue 265–267 coordinates ATP; the sequence is RRE. An L-serine-binding site is contributed by Glu-288. 352–355 is a binding site for ATP; sequence EISS. Ser-388 contributes to the L-serine binding site.

The protein belongs to the class-II aminoacyl-tRNA synthetase family. Type-1 seryl-tRNA synthetase subfamily. In terms of assembly, homodimer. The tRNA molecule binds across the dimer.

Its subcellular location is the cytoplasm. It carries out the reaction tRNA(Ser) + L-serine + ATP = L-seryl-tRNA(Ser) + AMP + diphosphate + H(+). The catalysed reaction is tRNA(Sec) + L-serine + ATP = L-seryl-tRNA(Sec) + AMP + diphosphate + H(+). Its pathway is aminoacyl-tRNA biosynthesis; selenocysteinyl-tRNA(Sec) biosynthesis; L-seryl-tRNA(Sec) from L-serine and tRNA(Sec): step 1/1. Its function is as follows. Catalyzes the attachment of serine to tRNA(Ser). Is also able to aminoacylate tRNA(Sec) with serine, to form the misacylated tRNA L-seryl-tRNA(Sec), which will be further converted into selenocysteinyl-tRNA(Sec). The chain is Serine--tRNA ligase from Synechococcus sp. (strain JA-3-3Ab) (Cyanobacteria bacterium Yellowstone A-Prime).